The following is a 432-amino-acid chain: Glial fibrillary acidic protein (432 aa).

Residues 1 to 72 form a head region; it reads MERRRITSAA…KETRASERAE (72 aa). Residue Thr-7 is modified to Phosphothreonine; by AURKB and ROCK1. Arg-12 is modified (omega-N-methylarginine). Phosphoserine; by AURKB and ROCK1 is present on Ser-13. Arg-30 and Arg-36 each carry citrulline. Position 38 is a phosphoserine; by AURKB and ROCK1 (Ser-38). An IF rod domain is found at 69–377; the sequence is ERAEMMELND…KLLEGEENRI (309 aa). Positions 73–104 are coil 1A; that stretch reads MMELNDRFASYIEKVRFLEQQNKALAAELNQL. A Phosphoserine modification is found at Ser-82. The linker 1 stretch occupies residues 105 to 115; that stretch reads RAKEPTKLADV. Thr-110 and Thr-150 each carry phosphothreonine. The tract at residues 116–214 is coil 1B; sequence YQAELRELRL…EEEVRELQEQ (99 aa). The tract at residues 215-230 is linker 12; sequence LARQQVHVELDMAKPD. Residues 231–252 form a coil 2A region; that stretch reads LTAALKEIRTQYEAMASSNMHE. The interval 253–256 is linker 2; it reads AEEW. Residues 257–377 are coil 2B; sequence YRSKFADLTD…KLLEGEENRI (121 aa). Residue Arg-270 is modified to Citrulline. The residue at position 323 (Ser-323) is a Phosphoserine. The tract at residues 378 to 432 is tail; the sequence is TIPVQTFSNLQIRETSLDTKSVSEGHLKRNIVVKTVEMRDGEVIKESKQEHKDVM. The residue at position 383 (Thr-383) is a Phosphothreonine. Phosphoserine is present on Ser-385. Citrulline is present on residues Arg-406 and Arg-416.

This sequence belongs to the intermediate filament family. In terms of assembly, interacts with SYNM. Post-translationally, phosphorylated by PKN1.

It localises to the cytoplasm. Functionally, GFAP, a class-III intermediate filament, is a cell-specific marker that, during the development of the central nervous system, distinguishes astrocytes from other glial cells. This is Glial fibrillary acidic protein (GFAP) from Pongo abelii (Sumatran orangutan).